The following is a 187-amino-acid chain: Elongation factor P 2 (187 aa).

The protein belongs to the elongation factor P family.

The protein resides in the cytoplasm. Its pathway is protein biosynthesis; polypeptide chain elongation. In terms of biological role, involved in peptide bond synthesis. Stimulates efficient translation and peptide-bond synthesis on native or reconstituted 70S ribosomes in vitro. Probably functions indirectly by altering the affinity of the ribosome for aminoacyl-tRNA, thus increasing their reactivity as acceptors for peptidyl transferase. This chain is Elongation factor P 2, found in Geobacter sulfurreducens (strain ATCC 51573 / DSM 12127 / PCA).